Here is a 380-residue protein sequence, read N- to C-terminus: Epoxyqueuosine reductase (380 aa).

Catalysis depends on Asp139, which acts as the Proton donor. In terms of domain architecture, 4Fe-4S ferredoxin-type 1 spans 181-213; that stretch reads IPFEPDDPLLDSCGDCTICVDRCPTSALVGNGQ. Positions 193, 196, 199, 203, 219, 245, 248, and 252 each coordinate [4Fe-4S] cluster. A 4Fe-4S ferredoxin-type 2 domain is found at 234-263; the sequence is YRYKIGNRLYGCDTCQQVCPKNRGINTEQD.

This sequence belongs to the QueG family. Monomer. Cob(II)alamin is required as a cofactor. It depends on [4Fe-4S] cluster as a cofactor.

The protein resides in the cytoplasm. The enzyme catalyses epoxyqueuosine(34) in tRNA + AH2 = queuosine(34) in tRNA + A + H2O. Its pathway is tRNA modification; tRNA-queuosine biosynthesis. In terms of biological role, catalyzes the conversion of epoxyqueuosine (oQ) to queuosine (Q), which is a hypermodified base found in the wobble positions of tRNA(Asp), tRNA(Asn), tRNA(His) and tRNA(Tyr). This Staphylococcus aureus (strain NCTC 8325 / PS 47) protein is Epoxyqueuosine reductase.